Consider the following 332-residue polypeptide: Holliday junction branch migration complex subunit RuvB (332 aa).

The interval 1 to 181 (MSRILDNEMM…FGITGHMEYY (181 aa)) is large ATPase domain (RuvB-L). ATP-binding positions include Leu-20, Arg-21, Gly-62, Lys-65, Thr-66, Thr-67, 128 to 130 (EDF), Arg-171, Tyr-181, and Arg-218. Thr-66 is a binding site for Mg(2+). A small ATPAse domain (RuvB-S) region spans residues 182–252 (AHADLTEIVE…ITDKALTMLD (71 aa)). Residues 255-332 (HEGLDYVDQK…EHLGYEYSEK (78 aa)) are head domain (RuvB-H). The DNA site is built by Arg-291, Arg-310, Arg-312, and Arg-315.

It belongs to the RuvB family. Homohexamer. Forms an RuvA(8)-RuvB(12)-Holliday junction (HJ) complex. HJ DNA is sandwiched between 2 RuvA tetramers; dsDNA enters through RuvA and exits via RuvB. An RuvB hexamer assembles on each DNA strand where it exits the tetramer. Each RuvB hexamer is contacted by two RuvA subunits (via domain III) on 2 adjacent RuvB subunits; this complex drives branch migration. In the full resolvosome a probable DNA-RuvA(4)-RuvB(12)-RuvC(2) complex forms which resolves the HJ.

The protein resides in the cytoplasm. It carries out the reaction ATP + H2O = ADP + phosphate + H(+). Its function is as follows. The RuvA-RuvB-RuvC complex processes Holliday junction (HJ) DNA during genetic recombination and DNA repair, while the RuvA-RuvB complex plays an important role in the rescue of blocked DNA replication forks via replication fork reversal (RFR). RuvA specifically binds to HJ cruciform DNA, conferring on it an open structure. The RuvB hexamer acts as an ATP-dependent pump, pulling dsDNA into and through the RuvAB complex. RuvB forms 2 homohexamers on either side of HJ DNA bound by 1 or 2 RuvA tetramers; 4 subunits per hexamer contact DNA at a time. Coordinated motions by a converter formed by DNA-disengaged RuvB subunits stimulates ATP hydrolysis and nucleotide exchange. Immobilization of the converter enables RuvB to convert the ATP-contained energy into a lever motion, pulling 2 nucleotides of DNA out of the RuvA tetramer per ATP hydrolyzed, thus driving DNA branch migration. The RuvB motors rotate together with the DNA substrate, which together with the progressing nucleotide cycle form the mechanistic basis for DNA recombination by continuous HJ branch migration. Branch migration allows RuvC to scan DNA until it finds its consensus sequence, where it cleaves and resolves cruciform DNA. The protein is Holliday junction branch migration complex subunit RuvB of Streptococcus pneumoniae serotype 4 (strain ATCC BAA-334 / TIGR4).